The following is a 216-amino-acid chain: Sperm microtubule inner protein 8 (216 aa).

In terms of assembly, microtubule inner protein component of sperm flagellar doublet microtubules. Expressed in testis.

Its subcellular location is the cytoplasm. The protein localises to the cytoskeleton. It is found in the flagellum axoneme. Functionally, microtubule inner protein (MIP) part of the dynein-decorated doublet microtubules (DMTs) in flagellum axoneme. May serve to reinforce and thus stabilize the microtubule structure in the sperm flagella. The protein is Sperm microtubule inner protein 8 (Spmip8) of Mus musculus (Mouse).